The chain runs to 215 residues: ATP-dependent Clp protease proteolytic subunit 1 (215 aa).

S111 acts as the Nucleophile in catalysis. Residue H136 is part of the active site.

The protein belongs to the peptidase S14 family. In terms of assembly, fourteen ClpP subunits assemble into 2 heptameric rings which stack back to back to give a disk-like structure with a central cavity, resembling the structure of eukaryotic proteasomes.

The protein resides in the cytoplasm. It carries out the reaction Hydrolysis of proteins to small peptides in the presence of ATP and magnesium. alpha-casein is the usual test substrate. In the absence of ATP, only oligopeptides shorter than five residues are hydrolyzed (such as succinyl-Leu-Tyr-|-NHMec, and Leu-Tyr-Leu-|-Tyr-Trp, in which cleavage of the -Tyr-|-Leu- and -Tyr-|-Trp bonds also occurs).. Cleaves peptides in various proteins in a process that requires ATP hydrolysis. Has a chymotrypsin-like activity. Plays a major role in the degradation of misfolded proteins. The polypeptide is ATP-dependent Clp protease proteolytic subunit 1 (Gluconobacter oxydans (strain 621H) (Gluconobacter suboxydans)).